Consider the following 84-residue polypeptide: Seminal ribonuclease (84 aa).

Cystine bridges form between Cys10–Cys65, Cys28–Cys80, and Cys35–Cys42. Substrate is bound by residues 11–15, Lys36, and Arg55; that span reads KPVNT.

This sequence belongs to the pancreatic ribonuclease family. In terms of assembly, homodimer; disulfide-linked.

Its subcellular location is the secreted. The enzyme catalyses an [RNA] containing cytidine + H2O = an [RNA]-3'-cytidine-3'-phosphate + a 5'-hydroxy-ribonucleotide-3'-[RNA].. It carries out the reaction an [RNA] containing uridine + H2O = an [RNA]-3'-uridine-3'-phosphate + a 5'-hydroxy-ribonucleotide-3'-[RNA].. The sequence is that of Seminal ribonuclease (SRN) from Giraffa camelopardalis (Giraffe).